We begin with the raw amino-acid sequence, 607 residues long: MSSAPETSDADHVSTAQPALGIPRPPSVGGISSRMTDVASEDGEQSQANTGISSRPPQSQRSLSRRGPPPARSSITAHSQMTSRPGSSASRLSRSHIPSLTAQGFFRPMSSQRLQAHRGRPVTKETATPSEDWNDQLDQNRQSIISNGTFPQSSAPQEEAPPSRGTEFTDPIIPDRNTSNASPFGNTTSRSVGESAKLLHDRDRVYKITPQHLDLGANHNIEKSDPSQRSPLSFLSLQNGNTAPEPRDNRAHERLSSADSSPGSIQKQHHAPTSANLGKNYEYFTGNTLFFGGGRFQNSRDKPINIATGIFVVLPSALFFAYSAPWLWHHISPAVPILFAYLFYICFSSFIHASVVDPGIIPRNLHPMPPPEPSGDPLLIGPPTNDWVMVKLATSDVAAMDVPVKYCKTCNIWRPPRCYHCRVCDNCVETLDHHCVWLNNCVGRRNYRYFFAFVSSATLLALFLLGASLAHVLVYRAREGVSFGSAIDKWRVPWAMVIYGALAAPYPASLWAYHLFLIGRGETTREYLNSHKFAKADRHRPFTQGNIFRNWISVLARPRPPTYLQFKRPYQEGDQRLSAMKRKDRPRDVEAQADIEMQHVPPTPRQG.

2 disordered regions span residues 1-198 and 217-272; these read MSSA…SAKL and ANHN…HHAP. At 1-305 the chain is on the cytoplasmic side; it reads MSSAPETSDA…FQNSRDKPIN (305 aa). Residues 53–66 are compositionally biased toward low complexity; the sequence is SSRPPQSQRSLSRR. Composition is skewed to polar residues over residues 73-102, 125-156, 176-192, and 227-242; these read SSIT…SLTA, ETAT…SSAP, RNTS…SRSV, and SQRS…NGNT. Over residues 245 to 256 the composition is skewed to basic and acidic residues; sequence EPRDNRAHERLS. Residues 257–272 show a composition bias toward polar residues; it reads SADSSPGSIQKQHHAP. The chain crosses the membrane as a helical span at residues 306–326; the sequence is IATGIFVVLPSALFFAYSAPW. The Lumenal segment spans residues 327–330; that stretch reads LWHH. A helical transmembrane segment spans residues 331–351; that stretch reads ISPAVPILFAYLFYICFSSFI. Over 352–449 the chain is Cytoplasmic; the sequence is HASVVDPGII…NCVGRRNYRY (98 aa). Residues 405–455 form the DHHC domain; it reads KYCKTCNIWRPPRCYHCRVCDNCVETLDHHCVWLNNCVGRRNYRYFFAFVS. The S-palmitoyl cysteine intermediate role is filled by cysteine 435. Residues 450-470 form a helical membrane-spanning segment; that stretch reads FFAFVSSATLLALFLLGASLA. At 471–497 the chain is on the lumenal side; it reads HVLVYRAREGVSFGSAIDKWRVPWAMV. A helical transmembrane segment spans residues 498-518; sequence IYGALAAPYPASLWAYHLFLI. Over 519–607 the chain is Cytoplasmic; it reads GRGETTREYL…QHVPPTPRQG (89 aa). A disordered region spans residues 570 to 607; the sequence is YQEGDQRLSAMKRKDRPRDVEAQADIEMQHVPPTPRQG.

This sequence belongs to the DHHC palmitoyltransferase family. ERF2/ZDHHC9 subfamily. In terms of processing, autopalmitoylated.

The protein localises to the endoplasmic reticulum membrane. The catalysed reaction is L-cysteinyl-[protein] + hexadecanoyl-CoA = S-hexadecanoyl-L-cysteinyl-[protein] + CoA. In terms of biological role, palmitoyltransferase specific for Ras proteins. In Aspergillus fumigatus (strain ATCC MYA-4609 / CBS 101355 / FGSC A1100 / Af293) (Neosartorya fumigata), this protein is Palmitoyltransferase erf2 (erf2).